Reading from the N-terminus, the 183-residue chain is Ribosome rescue factor SmrB (183 aa).

The Smr domain maps to 98–173 (LDLHGLTQLQ…GDAALLVLIE (76 aa)).

Belongs to the SmrB family. In terms of assembly, associates with collided ribosomes, but not with correctly translating polysomes.

In terms of biological role, acts as a ribosome collision sensor. Detects stalled/collided disomes (pairs of ribosomes where the leading ribosome is stalled and a second ribosome has collided with it) and endonucleolytically cleaves mRNA at the 5' boundary of the stalled ribosome. Stalled/collided disomes form a new interface (primarily via the 30S subunits) that binds SmrB. Cleaved mRNA becomes available for tmRNA ligation, leading to ribosomal subunit dissociation and rescue of stalled ribosomes. The polypeptide is Ribosome rescue factor SmrB (Salmonella paratyphi A (strain ATCC 9150 / SARB42)).